Here is a 424-residue protein sequence, read N- to C-terminus: Tyrosine--tRNA ligase (424 aa).

Position 37 (Tyr37) interacts with L-tyrosine. The 'HIGH' region motif lies at 42-51 (PTADSLHLGH). L-tyrosine contacts are provided by Tyr175 and Gln179. The short motif at 235–239 (KFGKT) is the 'KMSKS' region element. Lys238 provides a ligand contact to ATP. An S4 RNA-binding domain is found at 357–414 (ADLMQALVDAELQPSRGQARKTIASNAVTINGEKQSDPEYIFNDEDRLFGRYTLLRRG).

It belongs to the class-I aminoacyl-tRNA synthetase family. TyrS type 1 subfamily. Homodimer.

The protein resides in the cytoplasm. It catalyses the reaction tRNA(Tyr) + L-tyrosine + ATP = L-tyrosyl-tRNA(Tyr) + AMP + diphosphate + H(+). Its function is as follows. Catalyzes the attachment of tyrosine to tRNA(Tyr) in a two-step reaction: tyrosine is first activated by ATP to form Tyr-AMP and then transferred to the acceptor end of tRNA(Tyr). In Salmonella agona (strain SL483), this protein is Tyrosine--tRNA ligase.